We begin with the raw amino-acid sequence, 76 residues long: Anaredoxin (76 aa).

The 43-residue stretch at 24–66 (CMVCWEVNSKANGHHLIPYSEGGSADIQNMMTLCPSCHTKYHK) folds into the HNH domain.

Belongs to the HNH nuclease family.

Functionally, putative P-450 reductase. The chain is Anaredoxin from Nostoc sp. (strain PCC 7120 / SAG 25.82 / UTEX 2576).